The following is a 279-amino-acid chain: tRNA (guanine-N(1)-)-methyltransferase (279 aa).

S-adenosyl-L-methionine is bound by residues glycine 117 and 141-146; that span reads LGDYVL. The disordered stretch occupies residues 256-279; the sequence is WTPDGSGFRAGGDPVADSSDTNEP.

The protein belongs to the RNA methyltransferase TrmD family. Homodimer.

Its subcellular location is the cytoplasm. The catalysed reaction is guanosine(37) in tRNA + S-adenosyl-L-methionine = N(1)-methylguanosine(37) in tRNA + S-adenosyl-L-homocysteine + H(+). Its function is as follows. Specifically methylates guanosine-37 in various tRNAs. This is tRNA (guanine-N(1)-)-methyltransferase from Kineococcus radiotolerans (strain ATCC BAA-149 / DSM 14245 / SRS30216).